The primary structure comprises 257 residues: Peptide methionine sulfoxide reductase (257 aa).

The disordered stretch occupies residues Leu61–Pro88. Ser244 carries the phosphoserine modification.

The protein belongs to the MsrA Met sulfoxide reductase family.

It catalyses the reaction L-methionyl-[protein] + [thioredoxin]-disulfide + H2O = L-methionyl-(S)-S-oxide-[protein] + [thioredoxin]-dithiol. The catalysed reaction is [thioredoxin]-disulfide + L-methionine + H2O = L-methionine (S)-S-oxide + [thioredoxin]-dithiol. In terms of biological role, has an important function as a repair enzyme for proteins that have been inactivated by oxidation. Catalyzes the reversible oxidation-reduction of methionine sulfoxide in proteins to methionine. The polypeptide is Peptide methionine sulfoxide reductase (PMSR) (Brassica napus (Rape)).